The following is a 183-amino-acid chain: Oligoribonuclease (183 aa).

Residues 8–171 (LIWLDMEMTG…ADIRESIAEL (164 aa)) enclose the Exonuclease domain. The active site involves Tyr-129.

This sequence belongs to the oligoribonuclease family.

It localises to the cytoplasm. Functionally, 3'-to-5' exoribonuclease specific for small oligoribonucleotides. The protein is Oligoribonuclease of Aromatoleum aromaticum (strain DSM 19018 / LMG 30748 / EbN1) (Azoarcus sp. (strain EbN1)).